Here is a 97-residue protein sequence, read N- to C-terminus: Anti-sigma-YlaC factor YlaD (97 aa).

Zn(2+) contacts are provided by His29, Cys33, and Cys36. Residues 71–93 (YYGLLIMKAACWFGAAVAMMLII) form a helical membrane-spanning segment.

Belongs to the zinc-associated anti-sigma factor (ZAS) superfamily. The cofactor is Zn(2+).

The protein localises to the cell membrane. In terms of biological role, anti-sigma factor for YlaC. This Bacillus subtilis (strain 168) protein is Anti-sigma-YlaC factor YlaD (ylaD).